Here is a 66-residue protein sequence, read N- to C-terminus: Protein KleD (66 aa).

A DNA-binding region (H-T-H motif) is located at residues 33-52 (VAVRSGNEWQQVTKWVEPAR).

This chain is Protein KleD (kleD), found in Escherichia coli.